A 100-amino-acid polypeptide reads, in one-letter code: Protamine-2 (100 aa).

The disordered stretch occupies residues 1–45 (MVRYHVRSPSERPHREYRQLVNGQEQGRHGQEEQGMSAEGVEGYG). Phosphoserine is present on residues Ser-8, Ser-10, and Ser-37. Over residues 8–18 (SPSERPHREYR) the composition is skewed to basic and acidic residues.

It belongs to the protamine P2 family. As to quaternary structure, interacts with TDRP. Proteolytic processing into mature chains is required for histone eviction during spermatogenesis. Transition proteins (TNP1 and TNP2) are required for processing. As to expression, testis.

The protein localises to the nucleus. The protein resides in the chromosome. Functionally, protamines substitute for histones in the chromatin of sperm during the haploid phase of spermatogenesis. They compact sperm DNA into a highly condensed, stable and inactive complex. The protein is Protamine-2 (PRM2) of Alouatta seniculus (Red howler monkey).